A 150-amino-acid chain; its full sequence is Flagellar assembly factor FliW (150 aa).

Belongs to the FliW family. In terms of assembly, interacts with translational regulator CsrA. Interacts with flagellins FlaB1, FlaB2 and FlaB3.

Its subcellular location is the cytoplasm. Functionally, acts as an anti-CsrA protein, binds CsrA and prevents it from repressing translation of its target genes, one of which is flagellin. Binds to flagellin and participates in the assembly of the flagellum. Binds to the C-terminal region of flagellin, which is implicated in polymerization, and participates in the assembly of the flagellum. This Treponema pallidum (strain Nichols) protein is Flagellar assembly factor FliW.